Here is a 1856-residue protein sequence, read N- to C-terminus: Protein TANC1 (1856 aa).

Residue M1 is modified to N-acetylmethionine. 5 disordered regions span residues M1 to T45, S58 to P130, K203 to G222, R262 to Y296, and I437 to E489. Over residues K8 to G21 the composition is skewed to basic and acidic residues. Residues P29–T45 show a composition bias toward polar residues. 6 positions are modified to phosphoserine: S60, S63, S64, S204, S267, and S462. Positions S60 to R77 are enriched in low complexity. Residues K203–L216 are compositionally biased toward polar residues. The span at S439 to T475 shows a compositional bias: low complexity. ANK repeat units follow at residues E893 to Y925, N931 to G960, N964 to H993, K997 to P1026, A1037 to I1066, W1075 to R1104, R1108 to L1137, Q1141 to S1170, E1174 to Q1203, N1207 to H1236, and S1240 to N1269. TPR repeat units lie at residues L1286–E1319, V1333–S1366, and E1368–N1400. The span at L1417 to Q1426 shows a compositional bias: low complexity. Disordered stretches follow at residues L1417 to R1597, D1636 to F1720, and H1832 to V1856. Phosphoserine occurs at positions 1436 and 1463. Over residues E1454–S1463 the composition is skewed to acidic residues. 2 stretches are compositionally biased toward polar residues: residues E1490–A1505 and P1524–Q1556. A compositionally biased stretch (low complexity) spans S1656–S1686. A phosphoserine mark is found at S1665, S1673, and S1674.

It belongs to the TANC family. In terms of assembly, interacts probably directly with DLG1, DLG4, HOMER1. Interacts with DLGAP1, INA, CAMK2A, GRIN2B and GRIA1. Interacts with TNIK and MINK1. In terms of processing, phosphorylated; by MINK1 and TNIK upon stimulation by RAP2A.

Its subcellular location is the postsynaptic density. Its function is as follows. May be a scaffold component in the postsynaptic density. In Mus musculus (Mouse), this protein is Protein TANC1 (Tanc1).